Consider the following 108-residue polypeptide: Small ribosomal subunit protein uS10 (108 aa).

The protein belongs to the universal ribosomal protein uS10 family. In terms of assembly, part of the 30S ribosomal subunit.

Its function is as follows. Involved in the binding of tRNA to the ribosomes. This Mycoplasma pneumoniae (strain ATCC 29342 / M129 / Subtype 1) (Mycoplasmoides pneumoniae) protein is Small ribosomal subunit protein uS10.